The sequence spans 109 residues: Large ribosomal subunit protein bL31B (109 aa).

The disordered stretch occupies residues 79–109 (NVRQPAQQPQPEEDALPAAKGKKKVVTKKKK). Positions 98–109 (KGKKKVVTKKKK) are enriched in basic residues.

Belongs to the bacterial ribosomal protein bL31 family. Type B subfamily. Part of the 50S ribosomal subunit.

The protein is Large ribosomal subunit protein bL31B of Chlamydia pneumoniae (Chlamydophila pneumoniae).